We begin with the raw amino-acid sequence, 269 residues long: Energy-coupling factor transporter ATP-binding protein EcfA1 (269 aa).

Positions Ile-8 to Asp-242 constitute an ABC transporter domain. Gly-42–Ser-49 is a binding site for ATP.

Belongs to the ABC transporter superfamily. Energy-coupling factor EcfA family. In terms of assembly, forms a stable energy-coupling factor (ECF) transporter complex composed of 2 membrane-embedded substrate-binding proteins (S component), 2 ATP-binding proteins (A component) and 2 transmembrane proteins (T component).

Its subcellular location is the cell membrane. Its function is as follows. ATP-binding (A) component of a common energy-coupling factor (ECF) ABC-transporter complex. Unlike classic ABC transporters this ECF transporter provides the energy necessary to transport a number of different substrates. The sequence is that of Energy-coupling factor transporter ATP-binding protein EcfA1 from Staphylococcus aureus (strain MRSA252).